Reading from the N-terminus, the 637-residue chain is Biosynthetic arginine decarboxylase (637 aa).

Lysine 101 bears the N6-(pyridoxal phosphate)lysine mark. Substrate is bound at residue 286–296; the sequence is FDVGGGLAVDY.

It belongs to the Orn/Lys/Arg decarboxylase class-II family. SpeA subfamily. The cofactor is Mg(2+). It depends on pyridoxal 5'-phosphate as a cofactor.

The enzyme catalyses L-arginine + H(+) = agmatine + CO2. It participates in amine and polyamine biosynthesis; agmatine biosynthesis; agmatine from L-arginine: step 1/1. Functionally, catalyzes the biosynthesis of agmatine from arginine. In Shewanella loihica (strain ATCC BAA-1088 / PV-4), this protein is Biosynthetic arginine decarboxylase.